Reading from the N-terminus, the 132-residue chain is uncharacterized protein (132 aa).

2 helical membrane-spanning segments follow: residues 44 to 64 and 75 to 95; these read FMSF…FTFI and IAMI…AMLF.

The protein resides in the cytoplasm. It is found in the membrane. This is an uncharacterized protein from Schizosaccharomyces pombe (strain 972 / ATCC 24843) (Fission yeast).